A 686-amino-acid polypeptide reads, in one-letter code: Probable metal-nicotianamine transporter YSL10 (686 aa).

The next 14 membrane-spanning stretches (helical) occupy residues 36–56, 60–80, 109–129, 151–171, 212–232, 271–291, 316–336, 383–403, 415–435, 461–481, 501–521, 556–576, 597–617, and 639–659; these read VTLR…VIVM, LTTG…FFLL, CVVA…IFAM, LGWM…SVVP, MLGK…FYTG, LVNI…WPLI, VFIS…KVMT, IPNW…IATV, VAVS…GCGL, GGII…STAS, FVSQ…VFWL, GSLP…AIAV, MAIP…GSLI, and GLIC…LAGV.

It belongs to the YSL (TC 2.A.67.2) family.

The protein resides in the membrane. Functionally, may be involved in the transport of nicotianamine-chelated metals. This Oryza sativa subsp. japonica (Rice) protein is Probable metal-nicotianamine transporter YSL10 (YSL10).